Here is a 413-residue protein sequence, read N- to C-terminus: Probable aminotransferase sirI (413 aa).

Lys-255 is subject to N6-(pyridoxal phosphate)lysine.

Belongs to the class-I pyridoxal-phosphate-dependent aminotransferase family. The cofactor is pyridoxal 5'-phosphate.

It functions in the pathway mycotoxin biosynthesis. In terms of biological role, probable aminotransferase; part of the gene cluster that mediates the biosynthesis of sirodesmin PL, an epipolythiodioxopiperazine (ETP) characterized by a disulfide bridged cyclic dipeptide and that acts as a phytotoxin which is involved in the blackleg didease of canola. SirD catalyzes the O-prenylation of L-tyrosine (L-Tyr) in the presence of dimethylallyl diphosphate (DMAPP) to yield 4-O-dimethylallyl-L-Tyr, and therefore represents probably the first pathway-specific enzyme in the biosynthesis of sirodesmin PL. 4-O-dimethylallyl-L-Tyr, then undergoes condensation with L-Ser in a reaction catalyzed by the non-ribosomal peptide synthase sirP to form the diketopiperazine (DKP) backbone. Further bishydroxylation of the DKP performed by the cytochrome P450 monooxygenase sirC leads to the production of the intermediate phomamide. This step is essential to form the reactive thiol group required for toxicity of sirodesmin PL. The next steps of sirodesmin biosynthesis are not well understood yet, but some predictions could be made from intermediate compounds identification. Phomamide is converted into phomalizarine via oxidation, probably by sirT. Further oxidation, methylation (by sirM or sirN) and reduction steps convert phomalizarine to deacetyl sirodesmin. Finally, acetyltransferase sirH probably acetylates deacetyl sirodesmin to produce sirodesmin PL. The polypeptide is Probable aminotransferase sirI (Leptosphaeria maculans (Blackleg fungus)).